The sequence spans 384 residues: Alkanesulfonate monooxygenase (384 aa).

The protein belongs to the SsuD family.

It carries out the reaction an alkanesulfonate + FMNH2 + O2 = an aldehyde + FMN + sulfite + H2O + 2 H(+). Its function is as follows. Catalyzes the desulfonation of aliphatic sulfonates. The protein is Alkanesulfonate monooxygenase of Burkholderia thailandensis (strain ATCC 700388 / DSM 13276 / CCUG 48851 / CIP 106301 / E264).